The sequence spans 581 residues: Probable bifunctional SAT/APS kinase 2 (581 aa).

Residues 1–200 (MSGFVVWFTG…AAGGARGLIA (200 aa)) are adenylsulfate kinase. 10 to 17 (GLSGAGKS) serves as a coordination point for ATP. Residue S84 is the Phosphoserine intermediate of the active site. Positions 201 to 581 (PHGGELVNRW…ILIESMRSSS (381 aa)) are sulfate adenylyltransferase.

This sequence in the N-terminal section; belongs to the APS kinase family. In the C-terminal section; belongs to the sulfate adenylyltransferase family.

The catalysed reaction is sulfate + ATP + H(+) = adenosine 5'-phosphosulfate + diphosphate. It carries out the reaction adenosine 5'-phosphosulfate + ATP = 3'-phosphoadenylyl sulfate + ADP + H(+). It participates in sulfur metabolism; hydrogen sulfide biosynthesis; sulfite from sulfate: step 1/3. Its pathway is sulfur metabolism; hydrogen sulfide biosynthesis; sulfite from sulfate: step 2/3. The protein is Probable bifunctional SAT/APS kinase 2 (sat2/cysC2) of Sorangium cellulosum (strain So ce56) (Polyangium cellulosum (strain So ce56)).